We begin with the raw amino-acid sequence, 257 residues long: uncharacterized protein (257 aa).

Residues 6 to 26 form a helical membrane-spanning segment; sequence IFWLNLAAIIIISIVVSGDMF.

This sequence belongs to the staphylococcal tandem lipoprotein family.

The protein resides in the cell membrane. This is an uncharacterized protein from Staphylococcus aureus (strain NCTC 8325 / PS 47).